The sequence spans 57 residues: COP9 signalosome complex subunit 9 (57 aa).

Threonine 26 is subject to Phosphothreonine.

It belongs to the CSN9 family. Component of the CSN complex, composed of COPS1/GPS1, COPS2, COPS3, COPS4, COPS5, COPS6, COPS7 (COPS7A or COPS7B), COPS8 and COPS9. In the complex, it interacts directly with COPS3, COPS5 and COPS6.

It localises to the nucleus. The protein localises to the cytoplasm. The protein resides in the nucleoplasm. In terms of biological role, component of the COP9 signalosome complex (CSN), a complex involved in various cellular and developmental processes. The CSN complex is an essential regulator of the ubiquitin (Ubl) conjugation pathway by mediating the deneddylation of the cullin subunits of SCF-type E3 ligase complexes, leading to decrease the Ubl ligase activity of SCF-type complexes such as SCF, CSA or DDB2. The complex is also involved in phosphorylation of p53/TP53, c-jun/JUN, IkappaBalpha/NFKBIA, ITPK1 and IRF8/ICSBP, possibly via its association with CK2 and PKD kinases. CSN-dependent phosphorylation of TP53 and JUN promotes and protects degradation by the Ubl system, respectively. Plays a role in cell proliferation. The protein is COP9 signalosome complex subunit 9 of Mus musculus (Mouse).